A 340-amino-acid polypeptide reads, in one-letter code: Mitochondrial glycine transporter (340 aa).

Solcar repeat units lie at residues 23 to 108 (PKTL…ARNG), 128 to 218 (LSPF…FKND), and 237 to 325 (RSTI…LIKS). A run of 6 helical transmembrane segments spans residues 29–54 (LISG…TRLQ), 83–109 (GALP…RNGI), 134–159 (LATG…TRYE), 193–216 (GSFA…ELFK), 241–267 (INTS…KTRL), and 300–318 (GLSL…SWCI).

The protein belongs to the mitochondrial carrier (TC 2.A.29) family. SLC25A38 subfamily.

It is found in the mitochondrion inner membrane. It carries out the reaction glycine(in) = glycine(out). In terms of biological role, mitochondrial glycine transporter that imports glycine into the mitochondrial matrix. Plays an important role in providing glycine for the first enzymatic step in heme biosynthesis, the condensation of glycine with succinyl-CoA to produce 5-aminolevulinate (ALA) in the mitochondrial matrix. This Debaryomyces hansenii (strain ATCC 36239 / CBS 767 / BCRC 21394 / JCM 1990 / NBRC 0083 / IGC 2968) (Yeast) protein is Mitochondrial glycine transporter.